Here is a 380-residue protein sequence, read N- to C-terminus: SAM and SH3 domain-containing protein 3 (380 aa).

2 disordered regions span residues 1–76 and 96–168; these read MLRR…GKKW and LSEE…SPAP. Low complexity predominate over residues 22–41; it reads LQRSSSFKDFAKSKPSSPVV. Serine 27, serine 34, and serine 42 each carry phosphoserine. Threonine 61 carries the phosphothreonine modification. Residue serine 97 is modified to Phosphoserine. At threonine 103 the chain carries Phosphothreonine. Serine 110 carries the post-translational modification Phosphoserine. Threonine 112 is subject to Phosphothreonine. Phosphoserine is present on residues serine 113 and serine 120. A compositionally biased stretch (polar residues) spans 141–150; that stretch reads LSRQTSTGSE. The SH3 domain maps to 173–234; the sequence is PFCGRARVHT…KFIYVDVLPE (62 aa). An SAM domain is found at 252-316; sequence PKPKTLHELL…LTAAELLLDY (65 aa). Threonine 318 is modified (phosphothreonine). The span at 318–327 shows a compositional bias: acidic residues; the sequence is TGSEEAEEGA. Residues 318–380 form a disordered region; sequence TGSEEAEEGA…LQGLSLSGAP (63 aa). The residue at position 320 (serine 320) is a Phosphoserine. A compositionally biased stretch (polar residues) spans 369-380; it reads EQLQGLSLSGAP.

As to expression, preferentially expressed in lymphoid tissues. Expressed in bone marrow, thymus, spleen, lymph nodes and Peyer patches of gut. In the spleen and lymph nodes, expressed in both T- and B-cells. In the thymus, in the medulla and cortex.

Its function is as follows. May function as a signaling adapter protein in lymphocytes. This is SAM and SH3 domain-containing protein 3 (Sash3) from Mus musculus (Mouse).